The chain runs to 766 residues: MKTPWKVLLGLLGIAALVTVITVPVVLLNKGTDDAAADSRRTYTLTDYLKSTFRVKFYTLQWISDHEYLYKQENNILLFNAEYGNSSIFLENSTFDELGYSTNDYSVSPDRQFILFEYNYVKQWRHSYTASYDIYDLNKRQLITEERIPNNTQWITWSPVGHKLAYVWNNDIYVKNEPNLSSQRITWTGKENVIYNGVTDWVYEEEVFSAYSALWWSPNGTFLAYAQFNDTEVPLIEYSFYSDESLQYPKTVRIPYPKAGAENPTVKFFVVDTRTLSPNASVTSYQIVPPASVLIGDHYLCGVTWVTEERISLQWIRRAQNYSIIDICDYDESTGRWISSVARQHIEISTTGWVGRFRPAEPHFTSDGNSFYKIISNEEGYKHICHFQTDKSNCTFITKGAWEVIGIEALTSDYLYYISNEHKGMPGGRNLYRIQLNDYTKVTCLSCELNPERCQYYSASFSNKAKYYQLRCFGPGLPLYTLHSSSSDKELRVLEDNSALDKMLQDVQMPSKKLDVINLHGTKFWYQMILPPHFDKSKKYPLLIEVYAGPCSQKVDTVFRLSWATYLASTENIIVASFDGRGSGYQGDKIMHAINRRLGTFEVEDQIEATRQFSKMGFVDDKRIAIWGWSYGGYVTSMVLGAGSGVFKCGIAVAPVSKWEYYDSVYTERYMGLPTPEDNLDYYRNSTVMSRAENFKQVEYLLIHGTADDNVHFQQSAQLSKALVDAGVDFQTMWYTDEDHGIASNMAHQHIYTHMSHFLKQCFSLP.

The Cytoplasmic portion of the chain corresponds to 1-6 (MKTPWK). A helical; Signal-anchor for type II membrane protein membrane pass occupies residues 7–27 (VLLGLLGIAALVTVITVPVVL). The Extracellular portion of the chain corresponds to 28–766 (LNKGTDDAAA…HFLKQCFSLP (739 aa)). N-linked (GlcNAc...) asparagine glycans are attached at residues Asn85, Asn92, Asn150, Asn179, Asn219, Asn229, Asn279, and Asn321. 3 disulfide bridges follow: Cys385–Cys394, Cys444–Cys447, and Cys454–Cys472. Ser630 acts as the Charge relay system in catalysis. A disulfide bridge links Cys649 with Cys762. N-linked (GlcNAc...) asparagine glycosylation occurs at Asn685. Active-site charge relay system residues include Asp708 and His740.

The protein belongs to the peptidase S9B family. DPPIV subfamily. Monomer. Homodimer. Heterodimer with Seprase (FAP). Requires homodimerization for optimal dipeptidyl peptidase activity and T-cell costimulation. Found in a membrane raft complex, at least composed of BCL10, CARD11, DPP4 and IKBKB. Associates with collagen. Interacts with PTPRC; the interaction is enhanced in an interleukin-12-dependent manner in activated lymphocytes. Interacts (via extracellular domain) with ADA; does not inhibit its dipeptidyl peptidase activity. Interacts with CAV1 (via the N-terminus); the interaction is direct. Interacts (via cytoplasmic tail) with CARD11 (via PDZ domain); its homodimerization is necessary for interaction with CARD11. Interacts with IGF2R; the interaction is direct. Interacts with GPC3. Post-translationally, the soluble form (Dipeptidyl peptidase 4 soluble form also named SDPP) derives from the membrane form (Dipeptidyl peptidase 4 membrane form also named MDPP) by proteolytic processing. In terms of processing, N- and O-Glycosylated. Phosphorylated. Mannose 6-phosphate residues in the carbohydrate moiety are necessary for interaction with IGF2R in activated T-cells. Mannose 6-phosphorylation is induced during T-cell activation.

It localises to the secreted. The protein localises to the cell membrane. The protein resides in the apical cell membrane. It is found in the cell projection. Its subcellular location is the invadopodium membrane. It localises to the lamellipodium membrane. The protein localises to the cell junction. The protein resides in the membrane raft. It catalyses the reaction Release of an N-terminal dipeptide, Xaa-Yaa-|-Zaa-, from a polypeptide, preferentially when Yaa is Pro, provided Zaa is neither Pro nor hydroxyproline.. Inhibited by GPC3 and diprotin A. In terms of biological role, cell surface glycoprotein receptor involved in the costimulatory signal essential for T-cell receptor (TCR)-mediated T-cell activation. Acts as a positive regulator of T-cell coactivation, by binding at least ADA, CAV1, IGF2R, and PTPRC. Its binding to CAV1 and CARD11 induces T-cell proliferation and NF-kappa-B activation in a T-cell receptor/CD3-dependent manner. Its interaction with ADA also regulates lymphocyte-epithelial cell adhesion. In association with FAP is involved in the pericellular proteolysis of the extracellular matrix (ECM), the migration and invasion of endothelial cells into the ECM. May be involved in the promotion of lymphatic endothelial cells adhesion, migration and tube formation. When overexpressed, enhanced cell proliferation, a process inhibited by GPC3. Also acts as a serine exopeptidase with a dipeptidyl peptidase activity that regulates various physiological processes by cleaving peptides in the circulation, including many chemokines, mitogenic growth factors, neuropeptides and peptide hormones such as brain natriuretic peptide 32. Removes N-terminal dipeptides sequentially from polypeptides having unsubstituted N-termini provided that the penultimate residue is proline. The protein is Dipeptidyl peptidase 4 (DPP4) of Sus scrofa (Pig).